Here is a 336-residue protein sequence, read N- to C-terminus: Opsin-1, short-wave-sensitive 1 (336 aa).

The Extracellular portion of the chain corresponds to 1–29 (MDAWAVQFGNASKVSPFEGEQYHIAPKWA). Asn-10 carries N-linked (GlcNAc...) asparagine glycosylation. Residues 30-54 (FYLQAAFMGFVFIVGTPMNGIVLFV) form a helical membrane-spanning segment. Topologically, residues 55-66 (TMKYKKLRQPLN) are cytoplasmic. Residues 67 to 91 (YILVNISLAGFIFDTFSVSQVFVCA) form a helical membrane-spanning segment. The Extracellular portion of the chain corresponds to 92–106 (ARGYYFLGYTLCAME). Cys-103 and Cys-180 form a disulfide bridge. The helical transmembrane segment at 107-126 (AAMGSIAGLVTGWSLAVLAF) threads the bilayer. At 127 to 145 (ERYVVICKPFGSFKFGQGQ) the chain is on the cytoplasmic side. A helical transmembrane segment spans residues 146–169 (AVGAVVFTWIIGTACATPPFFGWS). The Extracellular segment spans residues 170–195 (RYIPEGLGTACGPDWYTKSEEYNSES). Residues 196–223 (YTYFLLITCFMMPMTIIIFSYSQLLGAL) traverse the membrane as a helical segment. The Cytoplasmic portion of the chain corresponds to 224 to 245 (RAVAAQQAESESTQKAEREVSR). A helical membrane pass occupies residues 246 to 269 (MVVVMVGSFVLCYAPYAVTAMYFA). Over 270–277 (NSDEPNKD) the chain is Extracellular. The chain crosses the membrane as a helical span at residues 278–302 (YRLVAIPAFFSKSSCVYNPLIYAFM). Lys-289 is modified (N6-(retinylidene)lysine). Residues 303-336 (NKQFNACIMETVFGKKIDESSEVSSKTETSSVSA) are Cytoplasmic-facing.

The protein belongs to the G-protein coupled receptor 1 family. Opsin subfamily. In terms of processing, phosphorylated on some or all of the serine and threonine residues present in the C-terminal region. As to expression, retinal short single cones, outer and inner segments.

The protein localises to the membrane. Its function is as follows. Visual pigments are the light-absorbing molecules that mediate vision. They consist of an apoprotein, opsin, covalently linked to cis-retinal. In Danio rerio (Zebrafish), this protein is Opsin-1, short-wave-sensitive 1 (opn1sw1).